The sequence spans 2144 residues: Insulin-like receptor (2144 aa).

Residues 1 to 43 form the signal peptide; it reads MFNMPRGVTKSKSKRGKIKMENDMAAAATTTACTLGHICVLCR. A glycan (N-linked (GlcNAc...) asparagine) is linked at Asn-74. Basic residues predominate over residues 174–199; that stretch reads RRQHQQQHHHHYQHHHQQHHQQHHQR. Residues 174–200 are disordered; that stretch reads RRQHQQQHHHHYQHHHQQHHQQHHQRQ. The N-linked (GlcNAc...) asparagine glycan is linked to Asn-203. The disordered stretch occupies residues 229-256; the sequence is NYKQQQQLQHNQQLPRATPQQKQQEKDR. Positions 232-242 are enriched in low complexity; that stretch reads QQQQLQHNQQL. Asn-265, Asn-356, Asn-376, Asn-406, Asn-468, and Asn-509 each carry an N-linked (GlcNAc...) asparagine glycan. 8 disulfide bridges follow: Cys-531-Cys-539, Cys-535-Cys-545, Cys-546-Cys-554, Cys-550-Cys-564, Cys-567-Cys-576, Cys-580-Cys-591, Cys-597-Cys-618, and Cys-635-Cys-638. The stretch at 542 to 586 is one FU repeat; it reads EHTCCSQDCLGGCVIDKNGNESCISCRNVSFNNICMDSCPKGYYQ. Asn-561 and Asn-569 each carry an N-linked (GlcNAc...) asparagine glycan. N-linked (GlcNAc...) asparagine glycans are attached at residues Asn-751, Asn-810, Asn-824, Asn-839, Asn-864, Asn-898, Asn-946, Asn-1053, Asn-1147, Asn-1218, and Asn-1265. 2 consecutive Fibronectin type-III domains span residues 825–927 and 928–1026; these read VTTK…TNPG and RPSK…EYDD. Positions 1053–1084 are disordered; that stretch reads NGSSDKSDGAEGAALDSNAIPNGGATNPSRRR. A Fibronectin type-III 3 domain is found at 1210–1305; the sequence is LKVDLEHANN…EVEHIKVEPP (96 aa). A helical membrane pass occupies residues 1311–1331; sequence VFFWLLGIGLAFLIVSLFGYV. Residues 1332–2144 lie on the Cytoplasmic side of the membrane; that stretch reads CYLHKRKVPS…PPNGFIGREA (813 aa). A chico-binding region spans residues 1351 to 1354; that stretch reads NPFY. Tyr-1354 bears the Phosphotyrosine; by autocatalysis mark. The region spanning 1371–1659 is the Protein kinase domain; sequence IIQLAPLGQG…LEPQCPNSQF (289 aa). ATP is bound by residues 1377–1385 and Lys-1405; that span reads LGQGSFGMV. Asp-1519 (proton acceptor) is an active-site residue. Phosphotyrosine; by autocatalysis occurs at positions 1545, 1549, and 1550. 4 disordered regions span residues 1690-1724, 1788-1871, 1886-1962, and 2020-2144; these read VPLD…DQPP, RGYE…KKTV, LFNH…ISDN, and ISHN…GREA. Ser-1816 bears the Phosphoserine mark. 2 stretches are compositionally biased toward low complexity: residues 1849–1860 and 1894–1916; these read STASAGSSNASS and SNAS…NLTS. Acidic residues predominate over residues 2042 to 2062; sequence SDEDNEQEEDDEDEDDDVDDE. Over residues 2063-2073 the composition is skewed to basic and acidic residues; sequence HVEHIKMERMP. Positions 2084–2120 are enriched in polar residues; that stretch reads SKTQPPRSRSVSQTRKSPTNPNSGIGATGAGNRSNLL.

This sequence belongs to the protein kinase superfamily. Tyr protein kinase family. Insulin receptor subfamily. As to quaternary structure, tetramer of 2 alpha and 2 beta chains linked by disulfide bonds. The alpha chains contribute to the formation of the ligand-binding domain, while the beta chains carry the kinase domain. Interacts (via C-terminal cytoplasmic region) with dock/dreadlocks (via SH2 and SH3 domains); when autophosphorylated. May interact (via beta subunit) with chico/IRS-1; this interaction may lead to tyrosine phosphorylation of the insulin receptor substrate chico. Interacts with Elp6; the interaction may stabilize Elp6. The cofactor is Mn(2+). Post-translationally, the 280 kDa proreceptor is proteolytically processed to form a 120 kDa alpha subunit and a 170 kDa beta subunit. The beta subunit undergoes cell-specific cleavage to generate a 90 kDa beta subunit and a free 60 kDa C-terminal subunit. Both the 90 kDa and the 170 kDa beta subunits can assemble with the alpha subunits to form mature receptors. Autophosphorylated on tyrosine residues, including Tyr-1549 and Tyr-1550, in response to exogenous insulin. Tyr-1549 and Tyr-1550 are dephosphorylated by Ptp61F recruited by the dock/dreadlocks adapter protein. In terms of processing, phosphorylation of Tyr-1354 is required for Chico-binding.

It localises to the membrane. Its subcellular location is the cell projection. It is found in the axon. The protein resides in the growth cone membrane. It catalyses the reaction L-tyrosyl-[protein] + ATP = O-phospho-L-tyrosyl-[protein] + ADP + H(+). Its activity is regulated as follows. Activated in response to insulin. Autophosphorylation activates the kinase activity. Functionally, has a ligand-stimulated tyrosine-protein kinase activity. Binds 3 insulin-like peptide ligands. Regulates cell number and cell size during development by regulating cell growth and survival, affecting body size and organ size, including ovaries and imaginal disks. Plays a role in life-span determination. May be involved in regulation of other neuroendocrine signaling pathways. Involved in the development of the embryonic nervous system. Functions upstream of dock/dreadlocks for photoreceptor (R cell) axon guidance and targeting in the visual system. Involved in the acs mediated recovery of gut enterocytes following the cytoplasmic purge response to intestinal bacterial infection. This Drosophila melanogaster (Fruit fly) protein is Insulin-like receptor.